The sequence spans 116 residues: U3-theraphotoxin-Lsp1a (116 aa).

The N-terminal stretch at 1 to 17 is a signal peptide; that stretch reads MKLSTFIIMISLAVALA. The propeptide occupies 18 to 50; that stretch reads TWPSEHIEGSDSETKLNVELGPYALADRAEKGK.

This sequence belongs to the neurotoxin 25 family. F7 subfamily. In terms of processing, contains 3 disulfide bonds. Expressed by the venom gland.

It is found in the secreted. This chain is U3-theraphotoxin-Lsp1a, found in Lasiodora sp. (strain IBSP 8539) (Brazilian salmon pink birdeater).